A 188-amino-acid chain; its full sequence is Phosphoribosylglycinamide formyltransferase (188 aa).

12 to 14 (GSN) lines the N(1)-(5-phospho-beta-D-ribosyl)glycinamide pocket. (6R)-10-formyltetrahydrofolate-binding positions include lysine 66, 91-94 (MRLI), and asparagine 108. The active-site Proton donor is the histidine 110.

This sequence belongs to the GART family.

It carries out the reaction N(1)-(5-phospho-beta-D-ribosyl)glycinamide + (6R)-10-formyltetrahydrofolate = N(2)-formyl-N(1)-(5-phospho-beta-D-ribosyl)glycinamide + (6S)-5,6,7,8-tetrahydrofolate + H(+). The protein operates within purine metabolism; IMP biosynthesis via de novo pathway; N(2)-formyl-N(1)-(5-phospho-D-ribosyl)glycinamide from N(1)-(5-phospho-D-ribosyl)glycinamide (10-formyl THF route): step 1/1. Its function is as follows. Catalyzes the transfer of a formyl group from 10-formyltetrahydrofolate to 5-phospho-ribosyl-glycinamide (GAR), producing 5-phospho-ribosyl-N-formylglycinamide (FGAR) and tetrahydrofolate. The polypeptide is Phosphoribosylglycinamide formyltransferase (Staphylococcus aureus (strain Mu50 / ATCC 700699)).